We begin with the raw amino-acid sequence, 87 residues long: UPF0147 protein AF_2370.1 (87 aa).

The protein belongs to the UPF0147 family.

The polypeptide is UPF0147 protein AF_2370.1 (Archaeoglobus fulgidus (strain ATCC 49558 / DSM 4304 / JCM 9628 / NBRC 100126 / VC-16)).